Reading from the N-terminus, the 79-residue chain is UPF0180 protein BCAH820_1484 (79 aa).

Belongs to the UPF0180 family.

This is UPF0180 protein BCAH820_1484 from Bacillus cereus (strain AH820).